The sequence spans 267 residues: L-aspartate dehydrogenase (267 aa).

Positions 124 and 190 each coordinate NAD(+). Residue His-218 is part of the active site.

It belongs to the L-aspartate dehydrogenase family.

It catalyses the reaction L-aspartate + NADP(+) + H2O = oxaloacetate + NH4(+) + NADPH + H(+). The catalysed reaction is L-aspartate + NAD(+) + H2O = oxaloacetate + NH4(+) + NADH + H(+). The protein operates within cofactor biosynthesis; NAD(+) biosynthesis; iminoaspartate from L-aspartate (dehydrogenase route): step 1/1. Functionally, specifically catalyzes the NAD or NADP-dependent dehydrogenation of L-aspartate to iminoaspartate. This is L-aspartate dehydrogenase from Methanocaldococcus jannaschii (strain ATCC 43067 / DSM 2661 / JAL-1 / JCM 10045 / NBRC 100440) (Methanococcus jannaschii).